The following is a 191-amino-acid chain: MKINGNEIRPGNVIEHQGSLWVAVKCNAVKPGKGGAFNQVELKNLLDGTKLNERFRAAETVERVRLEQKDFTFLYQQGDALVFMDSESYEQLELQKDFVGERAAFLQDGMTVTVELYQEKPIGISLPDQVAVTIVEADPALKGQTVTSSYKPAILENGIRILVPPFMNAGERIIVDTNELIYLRRANEKDK.

It belongs to the elongation factor P family.

The protein resides in the cytoplasm. It participates in protein biosynthesis; polypeptide chain elongation. Functionally, involved in peptide bond synthesis. Stimulates efficient translation and peptide-bond synthesis on native or reconstituted 70S ribosomes in vitro. Probably functions indirectly by altering the affinity of the ribosome for aminoacyl-tRNA, thus increasing their reactivity as acceptors for peptidyl transferase. This Bartonella tribocorum (strain CIP 105476 / IBS 506) protein is Elongation factor P.